The following is a 208-amino-acid chain: Putative vomeronasal receptor-like protein 4 (208 aa).

The Extracellular portion of the chain corresponds to 1–19 (MEMTKLFSYIVIKNVYYPQ). Residues 20–40 (VSFGISANTFLLLFHIFTFAY) form a helical membrane-spanning segment. Over 41 to 48 (THRLKPID) the chain is Cytoplasmic. The helical transmembrane segment at 49 to 69 (MTISHLPLIHILLLFTQAILV) threads the bilayer. Over 70–97 (SSDLFESWNIQNNDLKCKIITFLNRVMR) the chain is Extracellular. A disulfide bridge connects residues Cys-86 and Cys-173. Residues 98–118 (GVSICTTCLLSVLQAITISPS) traverse the membrane as a helical segment. The Cytoplasmic segment spans residues 119–135 (TSFLEKFKHISANHTLG). The chain crosses the membrane as a helical span at residues 136–156 (FILFSWVLNMFITNNLLLFIV). Residues 157-183 (PTPNRIGASLLFVTEHCYVLPMSYTHR) are Extracellular-facing. A helical transmembrane segment spans residues 184-204 (SLFFILMVLRDVIFIGLMVLS). At 205–208 (SGYG) the chain is on the cytoplasmic side.

This sequence belongs to the G-protein coupled receptor 1 family. In terms of tissue distribution, expressed in olfactory nerve.

It localises to the cell membrane. Putative pheromone receptor. The polypeptide is Putative vomeronasal receptor-like protein 4 (VN1R17P) (Homo sapiens (Human)).